The following is a 1068-amino-acid chain: Carbamoyl phosphate synthase large chain (1068 aa).

A carboxyphosphate synthetic domain region spans residues 1-401 (MPRRTDLHRI…SLLKAVRSLE (401 aa)). Residues arginine 129, arginine 169, glycine 175, glycine 176, glutamine 208, isoleucine 210, glutamate 215, glycine 241, valine 242, histidine 243, glutamine 284, and glutamate 298 each coordinate ATP. The ATP-grasp 1 domain maps to 133-327 (KQLMDELGQP…IAKIAAKIAV (195 aa)). Residues glutamine 284, glutamate 298, and asparagine 300 each coordinate Mg(2+). Glutamine 284, glutamate 298, and asparagine 300 together coordinate Mn(2+). The oligomerization domain stretch occupies residues 402–546 (IGVDHLALRE…YSTYEMENES (145 aa)). Positions 547-935 (KKSQRPSVLV…ALYKVFEAAN (389 aa)) are carbamoyl phosphate synthetic domain. An ATP-grasp 2 domain is found at 671-867 (ESLLAELGIP…MAEVATRIIL (197 aa)). ATP contacts are provided by arginine 707, arginine 746, leucine 748, glutamate 752, glycine 777, valine 778, histidine 779, serine 780, glutamine 820, and glutamate 838. Mg(2+) contacts are provided by glutamine 820, glutamate 838, and asparagine 840. 3 residues coordinate Mn(2+): glutamine 820, glutamate 838, and asparagine 840. The MGS-like domain maps to 936–1068 (LHVPEYGKIL…ESRVFSTESI (133 aa)). The interval 936-1068 (LHVPEYGKIL…ESRVFSTESI (133 aa)) is allosteric domain.

This sequence belongs to the CarB family. In terms of assembly, composed of two chains; the small (or glutamine) chain promotes the hydrolysis of glutamine to ammonia, which is used by the large (or ammonia) chain to synthesize carbamoyl phosphate. Tetramer of heterodimers (alpha,beta)4. Mg(2+) serves as cofactor. Requires Mn(2+) as cofactor.

The enzyme catalyses hydrogencarbonate + L-glutamine + 2 ATP + H2O = carbamoyl phosphate + L-glutamate + 2 ADP + phosphate + 2 H(+). It catalyses the reaction hydrogencarbonate + NH4(+) + 2 ATP = carbamoyl phosphate + 2 ADP + phosphate + 2 H(+). The protein operates within amino-acid biosynthesis; L-arginine biosynthesis; carbamoyl phosphate from bicarbonate: step 1/1. It functions in the pathway pyrimidine metabolism; UMP biosynthesis via de novo pathway; (S)-dihydroorotate from bicarbonate: step 1/3. In terms of biological role, large subunit of the glutamine-dependent carbamoyl phosphate synthetase (CPSase). CPSase catalyzes the formation of carbamoyl phosphate from the ammonia moiety of glutamine, carbonate, and phosphate donated by ATP, constituting the first step of 2 biosynthetic pathways, one leading to arginine and/or urea and the other to pyrimidine nucleotides. The large subunit (synthetase) binds the substrates ammonia (free or transferred from glutamine from the small subunit), hydrogencarbonate and ATP and carries out an ATP-coupled ligase reaction, activating hydrogencarbonate by forming carboxy phosphate which reacts with ammonia to form carbamoyl phosphate. This chain is Carbamoyl phosphate synthase large chain, found in Cutibacterium acnes (strain DSM 16379 / KPA171202) (Propionibacterium acnes).